Consider the following 264-residue polypeptide: Tryptophan synthase alpha chain (264 aa).

Residues Glu-49 and Asp-60 each act as proton acceptor in the active site.

This sequence belongs to the TrpA family. Tetramer of two alpha and two beta chains.

It carries out the reaction (1S,2R)-1-C-(indol-3-yl)glycerol 3-phosphate + L-serine = D-glyceraldehyde 3-phosphate + L-tryptophan + H2O. It participates in amino-acid biosynthesis; L-tryptophan biosynthesis; L-tryptophan from chorismate: step 5/5. The alpha subunit is responsible for the aldol cleavage of indoleglycerol phosphate to indole and glyceraldehyde 3-phosphate. The chain is Tryptophan synthase alpha chain from Laribacter hongkongensis (strain HLHK9).